The primary structure comprises 372 residues: Alanine dehydrogenase 2 (372 aa).

His95 is an active-site residue. Residue 169–199 participates in NAD(+) binding; that stretch reads KVTIIGGGQAGTNAAKIALGLGADVTILDVN.

It belongs to the AlaDH/PNT family.

The enzyme catalyses L-alanine + NAD(+) + H2O = pyruvate + NH4(+) + NADH + H(+). It participates in amino-acid degradation; L-alanine degradation via dehydrogenase pathway; NH(3) and pyruvate from L-alanine: step 1/1. Its function is as follows. May play a role in cell wall synthesis as L-alanine is an important constituent of the peptidoglycan layer. In Staphylococcus aureus (strain Mu50 / ATCC 700699), this protein is Alanine dehydrogenase 2 (ald2).